The primary structure comprises 211 residues: Middle transcription regulatory protein motA (211 aa).

Positions Leu23 to Pro42 form a DNA-binding region, H-T-H motif.

Functionally, required for the transcriptional activation of middle promoters. Middle promoters are characterized by the presence of the conserved sequence [AT]3TGCTTNA (MotA box). MotA binds directly to MotA boxes. The polypeptide is Middle transcription regulatory protein motA (motA) (Enterobacteria phage T4 (Bacteriophage T4)).